The chain runs to 227 residues: Ribose-5-phosphate isomerase A (227 aa).

Residues 26 to 29, 82 to 85, and 95 to 98 each bind substrate; these read TGST, DGAD, and KGGG. The Proton acceptor role is filled by Glu104. Lys122 is a substrate binding site.

The protein belongs to the ribose 5-phosphate isomerase family. In terms of assembly, homodimer.

The enzyme catalyses aldehydo-D-ribose 5-phosphate = D-ribulose 5-phosphate. It functions in the pathway carbohydrate degradation; pentose phosphate pathway; D-ribose 5-phosphate from D-ribulose 5-phosphate (non-oxidative stage): step 1/1. Functionally, catalyzes the reversible conversion of ribose-5-phosphate to ribulose 5-phosphate. In Streptococcus pneumoniae serotype 2 (strain D39 / NCTC 7466), this protein is Ribose-5-phosphate isomerase A.